The sequence spans 1334 residues: Rho1 guanine nucleotide exchange factor 1 (1334 aa).

4 disordered regions span residues 1–89 (MDYR…ASPV), 135–182 (PQVS…SDSV), 203–245 (LDQN…TSGT), and 381–402 (SLINDRSSTTTPTFVNSEASSP). Residues 138–149 (SNHAPNNSNSPS) show a composition bias toward low complexity. Residues 150–164 (LTWHTSSGDDSNQNP) show a composition bias toward polar residues. Residues 170-180 (QSQSSTSPVSD) are compositionally biased toward low complexity. Composition is skewed to polar residues over residues 213–227 (VRSSKNPFLSSNSRL), 234–245 (HTVGSHSFTSGT), and 381–400 (SLINDRSSTTTPTFVNSEAS). Phosphoserine is present on serine 381. The region spanning 621 to 808 (KRQEVICEVI…RGFLSRLNVE (188 aa)) is the DH domain. One can recognise a PH domain in the interval 843–973 (QLIFKGPLKK…WLEHIDNQQT (131 aa)). In terms of domain architecture, CNH spans 995–1293 (DNKVNAIGVY…RLLADGRGKL (299 aa)).

It is found in the cytoplasm. Functionally, stimulates the exchange of Rho1 and Rho5 GDP-bound form into GTP-bound form. Controls septum formation, cell wall synthesis and localization of F-actin patches. Coordinates actin deposition with cell wall biosynthesis during bipolar growth. The chain is Rho1 guanine nucleotide exchange factor 1 (rgf1) from Schizosaccharomyces pombe (strain 972 / ATCC 24843) (Fission yeast).